The sequence spans 370 residues: Homospermidine synthase 2 (370 aa).

It belongs to the deoxyhypusine synthase family. In terms of assembly, homotetramer. Requires NAD(+) as cofactor. The N-terminus is blocked. In terms of tissue distribution, expressed in roots.

The enzyme catalyses putrescine + spermidine = sym-homospermidine + propane-1,3-diamine. It participates in alkaloid biosynthesis; pyrrolizidine alkaloid biosynthesis. Catalyzes the transfer of an aminobutyl unit from spermidine onto putrescine. The resulting polyamine homospermidine is a precursor in the biosynthesis of pyrrolizidine alkaloids. This chain is Homospermidine synthase 2, found in Senecio vernalis (Spring groundsel).